We begin with the raw amino-acid sequence, 250 residues long: Flavin-dependent thymidylate synthase (250 aa).

The region spanning 7 to 233 (LSVELIACSS…PTVFGDFQVE (227 aa)) is the ThyX domain. Residues 92–95 (ELVR), 103–107 (QLSQR), and R172 contribute to the dUMP site. FAD is bound by residues 95-97 (RHR) and Q103. The ThyX motif motif lies at 95-105 (RHRHFSFSQLS). FAD-binding positions include 188-190 (NFR) and H194. R199 serves as a coordination point for dUMP. R199 serves as the catalytic Involved in ionization of N3 of dUMP, leading to its activation.

Belongs to the thymidylate synthase ThyX family. Homotetramer. FAD is required as a cofactor.

It catalyses the reaction dUMP + (6R)-5,10-methylene-5,6,7,8-tetrahydrofolate + NADPH + H(+) = dTMP + (6S)-5,6,7,8-tetrahydrofolate + NADP(+). It participates in pyrimidine metabolism; dTTP biosynthesis. Catalyzes the reductive methylation of 2'-deoxyuridine-5'-monophosphate (dUMP) to 2'-deoxythymidine-5'-monophosphate (dTMP) while utilizing 5,10-methylenetetrahydrofolate (mTHF) as the methyl donor, and NADPH and FADH(2) as the reductant. This is Flavin-dependent thymidylate synthase from Corynebacterium efficiens (strain DSM 44549 / YS-314 / AJ 12310 / JCM 11189 / NBRC 100395).